Here is a 155-residue protein sequence, read N- to C-terminus: MSSVILDLQIACEHSQGLPKETLFQHWLDGVLPQFQSESEVTIRIVDEAESHDLNLTYRGKNKPTNVLSFPFEAPPEIDLPLLGDLIICRQVVEKEAEEQQKTIEEHWAHMVVHGCLHLLGYDHIEDDEAEEMESLETEIMQKLGYADPYLAEKE.

Zn(2+) contacts are provided by H114, H118, and H124.

It belongs to the endoribonuclease YbeY family. Requires Zn(2+) as cofactor.

The protein localises to the cytoplasm. In terms of biological role, single strand-specific metallo-endoribonuclease involved in late-stage 70S ribosome quality control and in maturation of the 3' terminus of the 16S rRNA. This Photorhabdus laumondii subsp. laumondii (strain DSM 15139 / CIP 105565 / TT01) (Photorhabdus luminescens subsp. laumondii) protein is Endoribonuclease YbeY.